The chain runs to 419 residues: L-rhamnose isomerase (419 aa).

Histidine 262, aspartate 294, and aspartate 296 together coordinate Mn(2+).

Belongs to the rhamnose isomerase family. In terms of assembly, homotetramer. The cofactor is Mn(2+).

The protein localises to the cytoplasm. It carries out the reaction L-rhamnopyranose = L-rhamnulose. It functions in the pathway carbohydrate degradation; L-rhamnose degradation; glycerone phosphate from L-rhamnose: step 1/3. In terms of biological role, catalyzes the interconversion of L-rhamnose and L-rhamnulose. This is L-rhamnose isomerase from Salmonella gallinarum (strain 287/91 / NCTC 13346).